The primary structure comprises 576 residues: Ecdysone receptor (576 aa).

The segment at 1-162 is modulating; it reads MSLGARGYRR…GPAPRQQEEL (162 aa). The segment at 87–154 is disordered; the sequence is CTMEQQQPQP…GEARRQKKGP (68 aa). Residues 91–106 show a composition bias toward low complexity; sequence QQQPQPQQQPQQTQPL. A compositionally biased stretch (pro residues) spans 107–117; sequence PSMPLPMPPTT. NR C4-type zinc fingers lie at residues 163 to 183 and 199 to 223; these read CLVCGDRASGYHYNALTCEGC and CKFGHACEMDIYMRRKCQECRLKKC. The nuclear receptor DNA-binding region spans 163–235; sequence CLVCGDRASG…VGMRPECVVP (73 aa). The tract at residues 245–269 is disordered; that stretch reads EKKAQREKDKLPVSTTTVDDHMPPI. Residues 314–548 enclose the NR LBD domain; that stretch reads NQKSLIARLV…FLEEIWDVAD (235 aa).

Belongs to the nuclear hormone receptor family. NR1 subfamily.

It is found in the nucleus. Its function is as follows. Receptor for ecdysone. Binds to ecdysone response elements (ECRES). This chain is Ecdysone receptor (EcR), found in Heliothis virescens (Tobacco budworm moth).